The primary structure comprises 217 residues: Large ribosomal subunit protein uL29m (217 aa).

The protein belongs to the universal ribosomal protein uL29 family. In terms of assembly, component of the mitochondrial large ribosomal subunit. Mature mitochondrial ribosomes consist of a small (37S) and a large (54S) subunit. The 37S subunit contains at least 33 different proteins and 1 molecule of RNA (15S). The 54S subunit contains at least 45 different proteins and 1 molecule of RNA (21S).

It is found in the mitochondrion. In Aspergillus clavatus (strain ATCC 1007 / CBS 513.65 / DSM 816 / NCTC 3887 / NRRL 1 / QM 1276 / 107), this protein is Large ribosomal subunit protein uL29m (mrpl4).